We begin with the raw amino-acid sequence, 2603 residues long: Ankyrin repeat domain-containing protein 17 (2603 aa).

Residue M1 is modified to N-acetylmethionine. The span at 1–32 (MEKATVPAAAEGEGSPPAAAAVAAPPAAAAAE) shows a compositional bias: low complexity. The segment at 1 to 127 (MEKATVPAAA…DDDEEEEVSE (127 aa)) is disordered. Residues S15 and S42 each carry the phosphoserine modification. Basic residues predominate over residues 68-77 (PHHKAKRNRT). A compositionally biased stretch (low complexity) spans 82 to 92 (SSSESSSDSDN). A compositionally biased stretch (gly residues) spans 93–107 (SGGGGGGGGGGGGGT). Residues 112-127 (SEEEEDDDDEEEEVSE) show a composition bias toward acidic residues. Residue S152 is modified to Phosphoserine. ANK repeat units follow at residues 229 to 258 (SDNR…SVNE), 262 to 291 (EGES…NVED), 296 to 325 (GDIT…DVNA), 329 to 358 (TGNT…SIED), 362 to 391 (NGHT…GINT), 396 to 425 (FKES…DQEH), 429 to 458 (EMHT…QVNM), 462 to 491 (SFES…SLEE), 495 to 524 (EGYT…NINA), 529 to 558 (TQET…DIEL), 559 to 588 (GCST…NVHA), 592 to 621 (TGDT…DLEH), 625 to 654 (GGRT…NVNR), 659 to 688 (NDHT…DPTH), and 692 to 721 (DGST…NLLA). K314 is covalently cross-linked (Glycyl lysine isopeptide (Lys-Gly) (interchain with G-Cter in SUMO2)). The disordered stretch occupies residues 770–792 (VRSKAASKQKSNSHLPANSQDVQ). Residues 775–792 (ASKQKSNSHLPANSQDVQ) are compositionally biased toward polar residues. Residue S799 is modified to Phosphoserine. 10 ANK repeats span residues 1078 to 1107 (NHDT…SIEH), 1111 to 1140 (KGFT…DIEA), 1145 to 1174 (TKDT…NKEH), 1178 to 1207 (SDYT…EINS), 1213 to 1242 (LGIS…DINA), 1247 to 1276 (NRNT…NVEH), 1280 to 1309 (TGLT…DVNA), 1315 to 1344 (SRDT…HIDV), 1348 to 1377 (KGNT…DVDA), and 1381 to 1410 (RKIT…QFPS). Residues 1438 to 1522 (VQAKDRQAAE…EKEKLKVEEE (85 aa)) are a coiled coil. Residue S1453 is modified to Phosphoserine. Disordered stretches follow at residues 1475 to 1496 (AKRE…RKLE) and 1513 to 1713 (EKEK…PKRE). The segment covering 1477-1487 (REKRKEKRRKK) has biased composition (basic residues). Composition is skewed to low complexity over residues 1526-1546 (LTEP…TWTT), 1598-1607 (ESKSSSTSES), and 1616-1636 (SSCS…NHAS). At S1631 the chain carries Phosphoserine. Polar residues-rich tracts occupy residues 1638 to 1648 (VVTTTMASKKQ) and 1671 to 1699 (LSET…SPNG). Phosphoserine is present on residues S1692, S1696, and S1705. Residues 1721–1785 (RRSKKVSVPS…ESTRQATQLI (65 aa)) enclose the KH domain. R1870 carries the post-translational modification Asymmetric dimethylarginine. Disordered stretches follow at residues 1902–1991 (PRLP…PSVR), 2007–2195 (TTVT…SSSA), and 2269–2327 (VSSQ…YGSV). Low complexity-rich tracts occupy residues 1946–1989 (SNQN…SSPS) and 2007–2024 (TTVT…TNAT). Residues S2038, S2040, S2041, S2043, S2055, and S2063 each carry the phosphoserine modification. Low complexity-rich tracts occupy residues 2068-2077 (ASASEQEASS), 2087-2108 (RPPH…QQPP), and 2175-2189 (PPSH…TPAP). Positions 2269 to 2298 (VSSQSTPESMLSGKSSYLPNSDPLHQSDTS) are enriched in polar residues. The segment covering 2303–2313 (FRPPLQRPAPS) has biased composition (pro residues). Residue S2373 is modified to Phosphoserine. The tract at residues 2378 to 2447 (LTPCSSASNE…TGTSAPSVIG (70 aa)) is disordered. Over residues 2379 to 2391 (TPCSSASNESPAQ) the composition is skewed to polar residues. Residues 2392-2411 (SVSSGVRAPSPAPSSVPLGS) are compositionally biased toward low complexity. S2401 carries the phosphoserine modification. Over residues 2435–2447 (IRQTGTSAPSVIG) the composition is skewed to polar residues.

As to quaternary structure, interacts (via N-terminus) with NOD2. Interacts with CDK2, MCM3, MCM5, MCM7, CDC6 and PCNA. Interacts with MAVS and IFIH1. Interacts (via the second ankyrin repeat cluster) with RIGI. Phosphorylated by CDK2. Highly expressed in fetal liver. Detected in adult liver cells, ovarian oocytes, seminiferous tubules of the testes and pelvic region of the kidney. It was not detected in heart, gut, lung, spleen and skeletal muscle. Earliest specific in situ marker of hepatic differentiation during embryogenesis, useful for characterization of inductive events involved in hepatic specification.

It localises to the cytoplasm. The protein localises to the nucleus. Its function is as follows. Could play pivotal roles in cell cycle and DNA regulation. Involved in innate immune defense against viruse by positively regulating the viral dsRNA receptors RIGI and IFIH1 signaling pathways. Involves in NOD2- and NOD1-mediated responses to bacteria suggesting a role in innate antibacterial immune pathways too. Could play a central role for the formation and/or maintenance of the blood vessels of the circulation system. The chain is Ankyrin repeat domain-containing protein 17 (Ankrd17) from Mus musculus (Mouse).